The sequence spans 140 residues: Ribosome maturation factor RimP (140 aa).

The protein belongs to the RimP family.

The protein resides in the cytoplasm. Functionally, required for maturation of 30S ribosomal subunits. This chain is Ribosome maturation factor RimP, found in Campylobacter jejuni subsp. doylei (strain ATCC BAA-1458 / RM4099 / 269.97).